Here is a 103-residue protein sequence, read N- to C-terminus: Large ribosomal subunit protein bL21 (103 aa).

Belongs to the bacterial ribosomal protein bL21 family. As to quaternary structure, part of the 50S ribosomal subunit. Contacts protein L20.

In terms of biological role, this protein binds to 23S rRNA in the presence of protein L20. The sequence is that of Large ribosomal subunit protein bL21 from Hamiltonella defensa subsp. Acyrthosiphon pisum (strain 5AT).